The sequence spans 201 residues: Protein tirC (201 aa).

One can recognise a TIR domain in the interval E52–L186.

The polypeptide is Protein tirC (tirC) (Dictyostelium discoideum (Social amoeba)).